Reading from the N-terminus, the 906-residue chain is Protein translocase subunit SecA (906 aa).

Residues Gln-87, 105–109 (GEGKT), and Asp-507 contribute to the ATP site. The segment covering 553-563 (RHESRRIDNQL) has biased composition (basic and acidic residues). Disordered stretches follow at residues 553 to 576 (RHES…PGSS) and 854 to 906 (LEEP…GRLA). Cys-890, Cys-892, Cys-901, and His-902 together coordinate Zn(2+). The segment covering 896–906 (KKYKQCHGRLA) has biased composition (basic residues).

This sequence belongs to the SecA family. Monomer and homodimer. Part of the essential Sec protein translocation apparatus which comprises SecA, SecYEG and auxiliary proteins SecDF-YajC and YidC. Zn(2+) serves as cofactor.

Its subcellular location is the cell inner membrane. The protein resides in the cytoplasm. The catalysed reaction is ATP + H2O + cellular proteinSide 1 = ADP + phosphate + cellular proteinSide 2.. Its function is as follows. Part of the Sec protein translocase complex. Interacts with the SecYEG preprotein conducting channel. Has a central role in coupling the hydrolysis of ATP to the transfer of proteins into and across the cell membrane, serving both as a receptor for the preprotein-SecB complex and as an ATP-driven molecular motor driving the stepwise translocation of polypeptide chains across the membrane. This chain is Protein translocase subunit SecA, found in Methylococcus capsulatus (strain ATCC 33009 / NCIMB 11132 / Bath).